We begin with the raw amino-acid sequence, 183 residues long: Ferredoxin-2, mitochondrial (183 aa).

The N-terminal 52 residues, 1–52, are a transit peptide targeting the mitochondrion; the sequence is MAASMARGGVSARVLLQAARGTWWNRPGGTSGSGEGVALGTTRKFQATGSRP. Residues 45–65 form a disordered region; that stretch reads FQATGSRPAGEEDAGGPERPG. The 2Fe-2S ferredoxin-type domain maps to 68–170; sequence VNVVFVDRSG…GAEFTLPKIT (103 aa). Cys-105, Cys-111, Cys-114, and Cys-151 together coordinate [2Fe-2S] cluster.

Belongs to the adrenodoxin/putidaredoxin family. In terms of assembly, component of the mitochondrial core iron-sulfur cluster (ISC) complex composed of NFS1, LYRM4, NDUFAB1, ISCU, FXN, and FDX2; this complex is a heterohexamer containing two copies of each monomer. Form a heterodimer complex with NFS1. Interacts (in both their reduced and oxidized states) with the cysteine desulfurase complex; this interaction stimulates cysteine desulfurase activity, and serves as a reductant for Fe-S cluster assembly. [2Fe-2S] cluster is required as a cofactor. Widely expressed, with highest levels in testis, kidney and brain (at protein level). Expressed in muscle (at protein level). Expressed in fibroblasts (at protein level).

The protein resides in the mitochondrion. It localises to the mitochondrion matrix. In terms of biological role, electron donor, of the core iron-sulfur cluster (ISC) assembly complex, that acts to reduce the persulfide into sulfide during [2Fe-2S] clusters assembly on the scaffolding protein ISCU. The core iron-sulfur cluster (ISC) assembly complex is involved in the de novo synthesis of a [2Fe-2S] cluster, the first step of the mitochondrial iron-sulfur protein biogenesis. This process is initiated by the cysteine desulfurase complex (NFS1:LYRM4:NDUFAB1) that produces persulfide which is delivered on the scaffold protein ISCU in a FXN-dependent manner. Then this complex is stabilized by FDX2 which provides reducing equivalents to accomplish the [2Fe-2S] cluster assembly. Finally, the [2Fe-2S] cluster is transferred from ISCU to chaperone proteins, including HSCB, HSPA9 and GLRX5. Essential for coenzyme Q biosynthesis: together with FDXR, transfers the electrons required for the hydroxylation reaction performed by COQ6. The polypeptide is Ferredoxin-2, mitochondrial (Homo sapiens (Human)).